The following is a 211-amino-acid chain: N-(5'-phosphoribosyl)anthranilate isomerase (211 aa).

This sequence belongs to the TrpF family.

It carries out the reaction N-(5-phospho-beta-D-ribosyl)anthranilate = 1-(2-carboxyphenylamino)-1-deoxy-D-ribulose 5-phosphate. Its pathway is amino-acid biosynthesis; L-tryptophan biosynthesis; L-tryptophan from chorismate: step 3/5. This Nitrosomonas europaea (strain ATCC 19718 / CIP 103999 / KCTC 2705 / NBRC 14298) protein is N-(5'-phosphoribosyl)anthranilate isomerase.